Here is a 746-residue protein sequence, read N- to C-terminus: Double-stranded RNA-specific editase B2 (746 aa).

Disordered regions lie at residues 1–36 (MASV…KDKV) and 50–105 (SPGT…PLEE). The span at 20-34 (CKSKRRRRRRSKRKD) shows a compositional bias: basic residues. Positions 23–35 (KRRRRRRSKRKDK) are R-domain (ssRNA-binding). 2 consecutive DRBM domains span residues 126 to 192 (TPKN…SFVQ) and 284 to 348 (NPVV…ALFD). In terms of domain architecture, A to I editase spans 415-742 (VLSSGTKCIS…VRKPPEQDQF (328 aa)). His439 contacts Zn(2+). The active-site Proton donor is the Glu441. Zn(2+)-binding residues include Cys497 and Cys562.

In terms of tissue distribution, brain specific.

Its subcellular location is the nucleus. Lacks editing activity. It prevents the binding of other ADAR enzymes to targets in vitro, and decreases the efficiency of these enzymes. Capable of binding to dsRNA but also to ssRNA. The polypeptide is Double-stranded RNA-specific editase B2 (Adarb2) (Rattus norvegicus (Rat)).